The following is a 466-amino-acid chain: Aladin (466 aa).

WD repeat units follow at residues 135-174 (WLNSDVRYLAWNQHFFCLAVAGVDDVVRIYTKSSSATTAT), 179-218 (PSQTQITCMAWRPLCASEIVIGCRQGLCFWEVDSTLHLGR), 229-269 (PNNL…MQPL), 271-310 (RLGPPGSLLKWSPDNDWLFAATVDRVFRVWNCHQQWTTER), and 378-418 (LVGG…FDLQ).

Its subcellular location is the nucleus. It is found in the nuclear pore complex. The protein localises to the cytoplasm. The protein resides in the cytoskeleton. It localises to the spindle. Its function is as follows. Involved in mitotic spindle assembly. The chain is Aladin from Drosophila melanogaster (Fruit fly).